Consider the following 111-residue polypeptide: Ig heavy chain V-III region HPC76 (111 aa).

An Ig-like domain is found at 1–110 (ESGGGLVQPG…WGQGTTLTVS (110 aa)).

In Mus musculus (Mouse), this protein is Ig heavy chain V-III region HPC76.